A 1057-amino-acid chain; its full sequence is Carbamoyl phosphate synthase large chain (1057 aa).

Residues 1 to 401 (MPKRNDIKTI…SLLKAIRSLE (401 aa)) are carboxyphosphate synthetic domain. ATP-binding residues include Arg-129, Arg-169, Gly-175, Gly-176, Lys-208, Ile-210, Glu-215, Gly-241, Ile-242, His-243, Gln-284, and Glu-298. The ATP-grasp 1 domain occupies 133-327 (RTLMNDLNVP…IAKLAAKIAV (195 aa)). The Mg(2+) site is built by Gln-284, Glu-298, and Asn-300. The Mn(2+) site is built by Gln-284, Glu-298, and Asn-300. The tract at residues 402–546 (YGVHHLGLPN…YGTYETENES (145 aa)) is oligomerization domain. The tract at residues 547–929 (IVTDKEKILV…ALFKGLTGSG (383 aa)) is carbamoyl phosphate synthetic domain. Positions 671–861 (EALLRKINVP…MAQLAMRAII (191 aa)) constitute an ATP-grasp 2 domain. The ATP site is built by Arg-707, Arg-746, Leu-748, Glu-752, Gly-777, Val-778, His-779, Ser-780, Gln-820, and Glu-832. The Mg(2+) site is built by Gln-820, Glu-832, and Asn-834. Mn(2+)-binding residues include Gln-820, Glu-832, and Asn-834. The region spanning 930–1057 (VEVKDHGTVL…ESMTFTMRQM (128 aa)) is the MGS-like domain. The tract at residues 930–1057 (VEVKDHGTVL…ESMTFTMRQM (128 aa)) is allosteric domain.

The protein belongs to the CarB family. As to quaternary structure, composed of two chains; the small (or glutamine) chain promotes the hydrolysis of glutamine to ammonia, which is used by the large (or ammonia) chain to synthesize carbamoyl phosphate. Tetramer of heterodimers (alpha,beta)4. Requires Mg(2+) as cofactor. The cofactor is Mn(2+).

It catalyses the reaction hydrogencarbonate + L-glutamine + 2 ATP + H2O = carbamoyl phosphate + L-glutamate + 2 ADP + phosphate + 2 H(+). It carries out the reaction hydrogencarbonate + NH4(+) + 2 ATP = carbamoyl phosphate + 2 ADP + phosphate + 2 H(+). Its pathway is amino-acid biosynthesis; L-arginine biosynthesis; carbamoyl phosphate from bicarbonate: step 1/1. The protein operates within pyrimidine metabolism; UMP biosynthesis via de novo pathway; (S)-dihydroorotate from bicarbonate: step 1/3. In terms of biological role, large subunit of the glutamine-dependent carbamoyl phosphate synthetase (CPSase). CPSase catalyzes the formation of carbamoyl phosphate from the ammonia moiety of glutamine, carbonate, and phosphate donated by ATP, constituting the first step of 2 biosynthetic pathways, one leading to arginine and/or urea and the other to pyrimidine nucleotides. The large subunit (synthetase) binds the substrates ammonia (free or transferred from glutamine from the small subunit), hydrogencarbonate and ATP and carries out an ATP-coupled ligase reaction, activating hydrogencarbonate by forming carboxy phosphate which reacts with ammonia to form carbamoyl phosphate. The chain is Carbamoyl phosphate synthase large chain from Staphylococcus aureus (strain MRSA252).